A 412-amino-acid chain; its full sequence is Chorismate synthase (412 aa).

Arginine 40 and arginine 46 together coordinate NADP(+). Residues 135–137, 256–257, glycine 300, 315–319, and arginine 341 each bind FMN; these read RAS, QA, and KPIST. The span at 391-404 shows a compositional bias: basic and acidic residues; it reads QREPRQESSDEQPA. The tract at residues 391 to 412 is disordered; sequence QREPRQESSDEQPARRAANTAG.

The protein belongs to the chorismate synthase family. In terms of assembly, homotetramer. The cofactor is FMNH2.

It catalyses the reaction 5-O-(1-carboxyvinyl)-3-phosphoshikimate = chorismate + phosphate. It participates in metabolic intermediate biosynthesis; chorismate biosynthesis; chorismate from D-erythrose 4-phosphate and phosphoenolpyruvate: step 7/7. Catalyzes the anti-1,4-elimination of the C-3 phosphate and the C-6 proR hydrogen from 5-enolpyruvylshikimate-3-phosphate (EPSP) to yield chorismate, which is the branch point compound that serves as the starting substrate for the three terminal pathways of aromatic amino acid biosynthesis. This reaction introduces a second double bond into the aromatic ring system. The sequence is that of Chorismate synthase from Mycobacteroides abscessus (strain ATCC 19977 / DSM 44196 / CCUG 20993 / CIP 104536 / JCM 13569 / NCTC 13031 / TMC 1543 / L948) (Mycobacterium abscessus).